Consider the following 428-residue polypeptide: Histidine--tRNA ligase (428 aa).

Belongs to the class-II aminoacyl-tRNA synthetase family. Homodimer.

The protein resides in the cytoplasm. It catalyses the reaction tRNA(His) + L-histidine + ATP = L-histidyl-tRNA(His) + AMP + diphosphate + H(+). The sequence is that of Histidine--tRNA ligase from Bordetella pertussis (strain Tohama I / ATCC BAA-589 / NCTC 13251).